We begin with the raw amino-acid sequence, 249 residues long: MSFKREGDDQSQLNILKKRRVSDLLSNFIPDDEATLMKNGRYSCLVCSHRPVFDTVDMLVVHRKGKRHLEGMKWFYGKKNQLRREIDKRRHQDYVKAEDDRQEPSSSAPLLTQTRKITHHALLRTVPYSSCHKKASERSESSSKEHRNDLANSHLSMRTESNDSRTTVHQGPSEVKGEAKKKKKGASTLSSSVCEPLTEQRRRELDHYLKLKSSGWLQDRSGKWVKDENVEFDSDEEEPTLLPPCSESS.

The short motif at 4-20 (KREGDDQSQLNILKKRR) is the Bipartite nuclear localization signal element. A Matrin-type zinc finger spans residues 42–74 (YSCLVCSHRPVFDTVDMLVVHRKGKRHLEGMKW). Basic and acidic residues predominate over residues 94–103 (YVKAEDDRQE). Disordered stretches follow at residues 94-116 (YVKA…QTRK), 128-199 (YSSC…PLTE), and 228-249 (ENVE…SESS). A compositionally biased stretch (polar residues) spans 104 to 115 (PSSSAPLLTQTR). Positions 134-149 (KASERSESSSKEHRND) are enriched in basic and acidic residues. Polar residues predominate over residues 150–170 (LANSHLSMRTESNDSRTTVHQ). Positions 230–239 (VEFDSDEEEP) are enriched in acidic residues.

Component of the minor spliceosome, which splices U12-type introns.

The protein resides in the nucleus. Its subcellular location is the nucleoplasm. The protein localises to the nucleus speckle. In terms of biological role, as a component of the minor spliceosome, involved in the splicing of U12-type introns in pre-mRNAs. The polypeptide is Sodium channel modifier 1 (scnm1) (Danio rerio (Zebrafish)).